A 147-amino-acid chain; its full sequence is MKVILKQDVKKLGTAGEVKEVSDGYARNFLIPRGIAVEASKGHMKDLELQRKQEEERQQKLKEEAEELKQKLDNEKVVIYQKTGDEGKLFGSVTNKDVAEELKSKGYTVEKKKIEMEPIKSLGTHKVHVKLHPEVTVDIDVQVSEKK.

This sequence belongs to the bacterial ribosomal protein bL9 family.

In terms of biological role, binds to the 23S rRNA. The chain is Large ribosomal subunit protein bL9 from Natranaerobius thermophilus (strain ATCC BAA-1301 / DSM 18059 / JW/NM-WN-LF).